Consider the following 71-residue polypeptide: uncharacterized protein (71 aa).

Basic residues predominate over residues 1–10 (MHRKKRKKEK). A disordered region spans residues 1-20 (MHRKKRKKEKKRTEKDNTTN). A helical transmembrane segment spans residues 21–43 (LPPLFLFPCSLSLPTLLAPVHYI).

The protein localises to the membrane. This is an uncharacterized protein from Saccharomyces cerevisiae (strain ATCC 204508 / S288c) (Baker's yeast).